Consider the following 445-residue polypeptide: Oxysterols receptor LXR-alpha (445 aa).

Disordered regions lie at residues methionine 1–asparagine 34 and threonine 62–proline 86. Residues methionine 1–glutamate 94 are transactivation AF-1; required for ligand-independent transactivation function. The nuclear receptor DNA-binding region spans asparagine 93 to serine 168. 2 NR C4-type zinc fingers span residues cysteine 96 to cysteine 116 and cysteine 132 to cysteine 156. Residues lysine 178 to valine 200 form a disordered region. Positions serine 189–valine 200 are enriched in low complexity. The residue at position 191 (serine 191) is a Phosphoserine. The transactivation AF-2; required for ligand-dependent transactivation function; mediates interaction with CCAR2 stretch occupies residues glutamine 203 to glutamate 445. Residues glutamate 207–glutamate 445 enclose the NR LBD domain.

It belongs to the nuclear hormone receptor family. NR1 subfamily. In terms of assembly, heterodimer of NR1H3 and RXR (retinoic acid receptor). Interacts with CCAR2 (via N-terminus) in a ligand-independent manner. Interacts with SIRT1 and this interaction is inhibited by CCAR2. Ubiquitinated by UBR5, leading to its degradation: UBR5 specifically recognizes and binds ligand-bound NR1H3 when it is not associated with coactivators (NCOAs). In presence of NCOAs, the UBR5-degron is not accessible, preventing its ubiquitination and degradation. In adults it is expressed in spleen, pituitary, lung, liver, and fat. Weaker expression is observed in several other tissues.

The protein localises to the nucleus. The protein resides in the cytoplasm. In terms of biological role, nuclear receptor that exhibits a ligand-dependent transcriptional activation activity. Interaction with retinoic acid receptor (RXR) shifts RXR from its role as a silent DNA-binding partner to an active ligand-binding subunit in mediating retinoid responses through target genes defined by LXRES. LXRES are DR4-type response elements characterized by direct repeats of two similar hexanuclotide half-sites spaced by four nucleotides. Plays an important role in the regulation of cholesterol homeostasis, regulating cholesterol uptake through MYLIP-dependent ubiquitination of LDLR, VLDLR and LRP8. Interplays functionally with RORA for the regulation of genes involved in liver metabolism. Induces LPCAT3-dependent phospholipid remodeling in endoplasmic reticulum (ER) membranes of hepatocytes, driving SREBF1 processing and lipogenesis. Via LPCAT3, triggers the incorporation of arachidonate into phosphatidylcholines of ER membranes, increasing membrane dynamics and enabling triacylglycerols transfer to nascent very low-density lipoprotein (VLDL) particles. Via LPCAT3 also counteracts lipid-induced ER stress response and inflammation, likely by modulating SRC kinase membrane compartmentalization and limiting the synthesis of lipid inflammatory mediators. The chain is Oxysterols receptor LXR-alpha (Nr1h3) from Rattus norvegicus (Rat).